The chain runs to 245 residues: MSPPRPRASLSPLTLLLLLGGCLLSAAGRDKGAAGREVTRASRPTVGSSGRFVSPEQHACSWQLLVPAPGTPTGGELALRCQTPGGASLHCAYRGHPERCAATGARRAHYWRRLLGALRRRPRPCLDPAPLPPRLCARKTAGSDLHSPAHPSLPARPSEPPRSRARSPARSRQSVRSPSSQPEKKPLLVKSNSGGRKAGSDPVPEPPAAAGFQPNGLDQNAELTETYCTEKWHSLCNFFVNFWNG.

The signal sequence occupies residues 1 to 28 (MSPPRPRASLSPLTLLLLLGGCLLSAAG). Residues 33 to 52 (AAGREVTRASRPTVGSSGRF) form a disordered region. Disulfide bonds link cysteine 60–cysteine 81 and cysteine 91–cysteine 125. A disordered region spans residues 136–216 (CARKTAGSDL…PAAAGFQPNG (81 aa)). The span at 170–180 (RSRQSVRSPSS) shows a compositional bias: low complexity. A disulfide bridge links cysteine 228 with cysteine 236.

Belongs to the fibroblast growth factor-binding protein family. In terms of assembly, interacts with FGF2. In the adult, highly expressed in brain with lower levels in ovary. In the embryo, highest levels are found in the brain and spinal cord at 14 dpc and expression is almost completely restricted to the brain by 18 dpc. In the adult and postnatal brain, highly expressed in the orbitofrontal cortex where it is concentrated primarily in differentiated neurons.

The protein localises to the secreted. Its function is as follows. Heparin-binding protein which binds to FGF2, prevents binding of FGF2 to heparin and probably inhibits immobilization of FGF2 on extracellular matrix glycosaminoglycans, allowing its release and subsequent activation of FGFR signaling which leads to increased vascular permeability. This chain is Fibroblast growth factor-binding protein 3 (Fgfbp3), found in Mus musculus (Mouse).